Here is a 506-residue protein sequence, read N- to C-terminus: Sodium transporter HKT1 (506 aa).

Over 1–19 (MDRVVAKIAKIRSQLTKLR) the chain is Cytoplasmic. A helical transmembrane segment spans residues 20–40 (SLFFLYFIYFLFFSFLGFLAL). Topologically, residues 41–81 (KITKPRTTSRPHDFDLFFTSVSAITVSSMSTVDMEVFSNTQ) are extracellular. The chain crosses the membrane as a helical span at residues 82-102 (LIFLTILMFLGGEIFTSFLNL). Over 103-159 (YVSYFTKFVFPHNKIRHILGSYNSDSSIEDRCDVETVTDYREGLIKIDERASKCLYS) the chain is Cytoplasmic. The helical transmembrane segment at 160 to 180 (VVLSYHLVTNLVGSVLLLVYV) threads the bilayer. Topologically, residues 181–232 (NFVKTARDVLSSKEISPLTFSVFTTVSTFANCGFVPTNENMIIFRKNSGLIW) are extracellular. The chain crosses the membrane as a helical span at residues 233-253 (LLIPQVLMGNTLFPCFLVLLI). The Cytoplasmic portion of the chain corresponds to 254–286 (WGLYKITKRDEYGYILKNHNKMGYSHLLSVRLC). A helical transmembrane segment spans residues 287 to 307 (VLLGVTVLGFLIIQLLFFCAF). At 308–348 (EWTSESLEGMSSYEKLVGSLFQVVNSRHTGETIVDLSTLSP) the chain is on the extracellular side. The chain crosses the membrane as a helical span at residues 349-369 (AILVLFILMMYLPPYTLFMPL). The Cytoplasmic segment spans residues 370 to 392 (TEQKTIEKEGGDDDSENGKKVKK). Residues 393–413 (SGLIVSQLSFLTICIFLISIT) traverse the membrane as a helical segment. Over 414–465 (ERQNLQRDPINFNVLNITLEVISAYGNVGFTTGYSCERRVDISDGGCKDASY) the chain is Extracellular. Residue N429 is glycosylated (N-linked (GlcNAc...) asparagine). A helical membrane pass occupies residues 466–486 (GFAGRWSPMGKFVLIIVMFYG). The Cytoplasmic portion of the chain corresponds to 487 to 506 (RFKQFTAKSGRAWILYPSSS).

It belongs to the TrkH potassium transport family. HKT (TC 2.A.38.3) subfamily. N-glycosylated. Not essential for functional expression and membrane targeting. Highly expressed in roots. Expressed in flowers, leaves and stems. Expressed in the vascular tissues of every organs. In roots, leaves and flower peduncles, it is only expressed in the phloem tissues. Not expressed in root peripheral cells.

The protein localises to the cell membrane. It carries out the reaction Na(+)(in) = Na(+)(out). Functionally, sodium transporter protein, which plays a central role in plant tolerance to salt. Upon prolongated exposure to high concentrations, Na(+) translocates from the roots to the transpiring leaves where it can increase to toxic level. Involved in Na(+) recirculation from shoots to roots, probably by mediating Na(+) loading into the phloem sap in shoots and unloading in roots, thereby removing large amounts of Na(+) from the shoot. Does not transport K(+) but regulates K(+) nutrient status via its ability to facilitate Na(+) homeostasis. Probably not involved in root uptake of Na(+). This Arabidopsis thaliana (Mouse-ear cress) protein is Sodium transporter HKT1 (HKT1).